A 92-amino-acid polypeptide reads, in one-letter code: Small ribosomal subunit protein bS20 (92 aa).

The disordered stretch occupies residues 1–22 (MANSPQSKKRARQAEARAAVNK).

Belongs to the bacterial ribosomal protein bS20 family.

Binds directly to 16S ribosomal RNA. This is Small ribosomal subunit protein bS20 from Cereibacter sphaeroides (strain ATCC 17029 / ATH 2.4.9) (Rhodobacter sphaeroides).